We begin with the raw amino-acid sequence, 214 residues long: MADS-box protein CMB2 (214 aa).

The 56-residue stretch at 3–58 (RGKLEIRKIENKTNRQVTFSKRRNGIMKKAQELTVLCDAKVSLLMISSTHKLHHYL) folds into the MADS-box domain. The 91-residue stretch at 84–174 (WERMQEQHRK…VMELEAKFRG (91 aa)) folds into the K-box domain.

In flowers. Not found in vegetative tissues.

It localises to the nucleus. This Dianthus caryophyllus (Carnation) protein is MADS-box protein CMB2 (CMB2).